A 429-amino-acid chain; its full sequence is Enolase (429 aa).

Residue Gln162 participates in (2R)-2-phosphoglycerate binding. The Proton donor role is filled by Glu204. Residues Asp242, Glu289, and Asp316 each contribute to the Mg(2+) site. Positions 341, 370, 371, and 392 each coordinate (2R)-2-phosphoglycerate. Lys341 (proton acceptor) is an active-site residue.

Belongs to the enolase family. Mg(2+) is required as a cofactor.

The protein localises to the cytoplasm. It is found in the secreted. Its subcellular location is the cell surface. The enzyme catalyses (2R)-2-phosphoglycerate = phosphoenolpyruvate + H2O. It functions in the pathway carbohydrate degradation; glycolysis; pyruvate from D-glyceraldehyde 3-phosphate: step 4/5. In terms of biological role, catalyzes the reversible conversion of 2-phosphoglycerate (2-PG) into phosphoenolpyruvate (PEP). It is essential for the degradation of carbohydrates via glycolysis. The protein is Enolase of Flavobacterium psychrophilum (strain ATCC 49511 / DSM 21280 / CIP 103535 / JIP02/86).